The following is a 124-amino-acid chain: 14 kDa peptide of ubiquinol-cytochrome c2 oxidoreductase complex (124 aa).

A helical membrane pass occupies residues 85–102 (LGGFASGALLALALAGIF).

It is found in the cell inner membrane. Component of the ubiquinol-cytochrome c reductase complex (complex III or cytochrome b-c1 complex), which is a respiratory chain that generates an electrochemical potential coupled to ATP synthesis. The chain is 14 kDa peptide of ubiquinol-cytochrome c2 oxidoreductase complex from Cereibacter sphaeroides (Rhodobacter sphaeroides).